We begin with the raw amino-acid sequence, 257 residues long: Aspartate/glutamate leucyltransferase (257 aa).

The protein belongs to the R-transferase family. Bpt subfamily.

It localises to the cytoplasm. It carries out the reaction N-terminal L-glutamyl-[protein] + L-leucyl-tRNA(Leu) = N-terminal L-leucyl-L-glutamyl-[protein] + tRNA(Leu) + H(+). The catalysed reaction is N-terminal L-aspartyl-[protein] + L-leucyl-tRNA(Leu) = N-terminal L-leucyl-L-aspartyl-[protein] + tRNA(Leu) + H(+). In terms of biological role, functions in the N-end rule pathway of protein degradation where it conjugates Leu from its aminoacyl-tRNA to the N-termini of proteins containing an N-terminal aspartate or glutamate. This Leptospira interrogans serogroup Icterohaemorrhagiae serovar copenhageni (strain Fiocruz L1-130) protein is Aspartate/glutamate leucyltransferase.